The primary structure comprises 441 residues: Glutamate-1-semialdehyde 2,1-aminomutase (441 aa).

N6-(pyridoxal phosphate)lysine is present on Lys273.

This sequence belongs to the class-III pyridoxal-phosphate-dependent aminotransferase family. HemL subfamily. Pyridoxal 5'-phosphate is required as a cofactor.

The protein localises to the cytoplasm. The enzyme catalyses (S)-4-amino-5-oxopentanoate = 5-aminolevulinate. The protein operates within porphyrin-containing compound metabolism; protoporphyrin-IX biosynthesis; 5-aminolevulinate from L-glutamyl-tRNA(Glu): step 2/2. The chain is Glutamate-1-semialdehyde 2,1-aminomutase from Pyrobaculum calidifontis (strain DSM 21063 / JCM 11548 / VA1).